Consider the following 86-residue polypeptide: Cell division topological specificity factor (86 aa).

The protein belongs to the MinE family.

In terms of biological role, prevents the cell division inhibition by proteins MinC and MinD at internal division sites while permitting inhibition at polar sites. This ensures cell division at the proper site by restricting the formation of a division septum at the midpoint of the long axis of the cell. In Stenotrophomonas maltophilia (strain K279a), this protein is Cell division topological specificity factor.